The following is a 1140-amino-acid chain: DNA damage-binding protein 1 (1140 aa).

S2 is modified (N-acetylserine). The segment at S2–S768 is interaction with CDT1. The interval T13–L356 is WD repeat beta-propeller A. The WD repeat beta-propeller B; Interaction with CUL4A stretch occupies residues R391–Q708. The WD repeat beta-propeller C stretch occupies residues K709–L1043. The segment at F771–H1140 is interaction with CDT1 and CUL4A. K1067 is modified (N6-acetyllysine). Residue K1121 forms a Glycyl lysine isopeptide (Lys-Gly) (interchain with G-Cter in SUMO2) linkage. T1125 is subject to Phosphothreonine.

The protein belongs to the DDB1 family. In terms of assembly, component of the UV-DDB complex which includes DDB1 and DDB2; the heterodimer dimerizes to give rise to a heterotetramer when bound to damaged DNA. The UV-DDB complex interacts with monoubiquitinated histone H2A and binds to XPC via the DDB2 subunit. Component of numerous DCX (DDB1-CUL4-X-box) E3 ubiquitin-protein ligase complexes which consist of a core of DDB1, CUL4A or CUL4B and RBX1. DDB1 may recruit specific substrate targeting subunits to the DCX complex. These substrate targeting subunits are generally known as DCAF (DDB1- and CUL4-associated factor) or CDW (CUL4-DDB1-associated WD40-repeat) proteins. Interacts with AMBRA1, ATG16L1, BTRC, CRBN, DCAF1, DCAF4, DCAF5, DCAF6, DCAF7, DCAF8, DCAF9, DCAF10, DCAF11, DCAF12, DCAF15, DCAF16, DCAF17, DDA1, DET1, DTL, ERCC8, FBXW5, FBXW8, GRWD1, KATNB1, NLE1, NUP43, PAFAH1B1, PHIP, PWP1, RBBP4, RBBP5, RBBP7, COP1, SNRNP40, DCAF1, WDR5, WDR5B, WDR12, WDR26, WDR39, WDR42, WDR53, WDR59, WDR61, WSB1, WSB2, LRWD1 and WDTC1. DCX complexes may associate with the COP9 signalosome, and this inhibits the E3 ubiquitin-protein ligase activity of the complex. Interacts with NF2, TSC1 and TSC2. Interacts with AGO1 and AGO2. Associates with the E3 ligase complex containing DYRK2, EDD/UBR5, DDB1 and DCAF1 proteins (EDVP complex). Interacts directly with DYRK2. DCX(DTL) complex interacts with FBXO11; does not ubiquitinate and degradate FBXO11. Interacts with TRPC4AP. Interacts with CRY1 and CRY2. The DDB1-CUL4A complex interacts with CRY1. May also interact with DCUN1D1, DCUN1D2, DCUN1D3 and DCUN1D5. Component of the DCX(DCAF13) E3 ubiquitin ligase complex, at least composed of CUL4 (CUL4A or CUL4B), DDB1, DCAF13 and RBX1. Interacts with DCAF13 (via WD40 domain). Phosphorylated by ABL1. In terms of processing, ubiquitinated by CUL4A. Subsequently degraded by ubiquitin-dependent proteolysis. Post-translationally, acetylated, promoting interaction with CUL4 (CUL4A or CUL4B) and subsequent formation of DCX (DDB1-CUL4-X-box) E3 ubiquitin-protein ligase complexes. Deacetylation by SIRT7 impairs the interaction with CUL4 (CUL4A or CUL4B) and formation of DCX (DDB1-CUL4-X-box) E3 ubiquitin-protein ligase complexes.

The protein resides in the cytoplasm. The protein localises to the nucleus. The protein operates within protein modification; protein ubiquitination. Its function is as follows. Protein, which is both involved in DNA repair and protein ubiquitination, as part of the UV-DDB complex and DCX (DDB1-CUL4-X-box) complexes, respectively. Core component of the UV-DDB complex (UV-damaged DNA-binding protein complex), a complex that recognizes UV-induced DNA damage and recruit proteins of the nucleotide excision repair pathway (the NER pathway) to initiate DNA repair. The UV-DDB complex preferentially binds to cyclobutane pyrimidine dimers (CPD), 6-4 photoproducts (6-4 PP), apurinic sites and short mismatches. Also functions as a component of numerous distinct DCX (DDB1-CUL4-X-box) E3 ubiquitin-protein ligase complexes which mediate the ubiquitination and subsequent proteasomal degradation of target proteins. The functional specificity of the DCX E3 ubiquitin-protein ligase complex is determined by the variable substrate recognition component recruited by DDB1. DCX(DDB2) (also known as DDB1-CUL4-ROC1, CUL4-DDB-ROC1 and CUL4-DDB-RBX1) may ubiquitinate histone H2A, histone H3 and histone H4 at sites of UV-induced DNA damage. The ubiquitination of histones may facilitate their removal from the nucleosome and promote subsequent DNA repair. DCX(DDB2) also ubiquitinates XPC, which may enhance DNA-binding by XPC and promote NER. DCX(DTL) plays a role in PCNA-dependent polyubiquitination of CDT1 and MDM2-dependent ubiquitination of TP53 in response to radiation-induced DNA damage and during DNA replication. DCX(ERCC8) (the CSA complex) plays a role in transcription-coupled repair (TCR). The DDB1-CUL4A-DTL E3 ligase complex regulates the circadian clock function by mediating the ubiquitination and degradation of CRY1. DDB1-mediated CRY1 degradation promotes FOXO1 protein stability and FOXO1-mediated gluconeogenesis in the liver. By acting on TET dioxygenses, essential for oocyte maintenance at the primordial follicle stage, hence essential for female fertility. Maternal factor required for proper zygotic genome activation and genome reprogramming. This is DNA damage-binding protein 1 (DDB1) from Bos taurus (Bovine).